The chain runs to 165 residues: Protein C2-DOMAIN ABA-RELATED 7 (165 aa).

Methionine 1 carries the post-translational modification N-acetylmethionine. The C2 domain occupies methionine 1 to aspartate 106. Arginine 21, aspartate 22, aspartate 27, aspartate 73, lysine 74, aspartate 75, and aspartate 81 together coordinate Ca(2+).

This sequence belongs to the plant CAR protein family. In terms of assembly, binds to PYR/PYL/RCAR abscisic acid intracellular receptors in an ABA-independent manner, both at the plasma membrane and in the nucleus.

The protein localises to the cell membrane. Its subcellular location is the nucleus. Stimulates the GTPase/ATPase activities of Obg-like ATPases. Mediates the transient calcium-dependent interaction of PYR/PYL/RCAR abscisic acid (ABA) receptors with the plasma membrane and thus regulates ABA sensitivity. The polypeptide is Protein C2-DOMAIN ABA-RELATED 7 (Arabidopsis thaliana (Mouse-ear cress)).